The sequence spans 396 residues: S-adenosylmethionine synthase (396 aa).

An ATP-binding site is contributed by His15. Asp17 contributes to the Mg(2+) binding site. Glu43 contributes to the K(+) binding site. L-methionine contacts are provided by Glu56 and Gln99. Residues 99–109 (QSSDIAQGVDR) are flexible loop. ATP is bound by residues 175–177 (DGK), 241–242 (RF), Asp250, 256–257 (RK), Ser273, and Lys277. Asp250 serves as a coordination point for L-methionine. Lys281 lines the L-methionine pocket.

Belongs to the AdoMet synthase family. In terms of assembly, homotetramer; dimer of dimers. It depends on Mg(2+) as a cofactor. The cofactor is K(+).

It is found in the cytoplasm. It catalyses the reaction L-methionine + ATP + H2O = S-adenosyl-L-methionine + phosphate + diphosphate. Its pathway is amino-acid biosynthesis; S-adenosyl-L-methionine biosynthesis; S-adenosyl-L-methionine from L-methionine: step 1/1. Functionally, catalyzes the formation of S-adenosylmethionine (AdoMet) from methionine and ATP. The overall synthetic reaction is composed of two sequential steps, AdoMet formation and the subsequent tripolyphosphate hydrolysis which occurs prior to release of AdoMet from the enzyme. This Pelotomaculum thermopropionicum (strain DSM 13744 / JCM 10971 / SI) protein is S-adenosylmethionine synthase.